The primary structure comprises 182 residues: Adenine phosphoribosyltransferase (182 aa).

It belongs to the purine/pyrimidine phosphoribosyltransferase family. As to quaternary structure, homodimer.

The protein localises to the cytoplasm. It carries out the reaction AMP + diphosphate = 5-phospho-alpha-D-ribose 1-diphosphate + adenine. It participates in purine metabolism; AMP biosynthesis via salvage pathway; AMP from adenine: step 1/1. Catalyzes a salvage reaction resulting in the formation of AMP, that is energically less costly than de novo synthesis. The chain is Adenine phosphoribosyltransferase from Streptomyces galbus.